The sequence spans 612 residues: MDIKKLQDYQKHIRNFSIVAHIDHGKSTIADRILELTDTVSERQMKNQLLDDMPLERQRGITIKLNSVEVKYHAKDGETYIFHLIDTPGHVDFSYEVSRSLAACEGALLVVDATQGVQAQTLANTYLAIDDDLEILPVINKIDLPSADPEMCKNEIEEMIGLDASDAVEVSGKTGQGIPELLEEIVKKVPAPNGDLNAPLKALIFDSKYDDYRGVVLSVRIEEGTVKPGDRIRIMNTGKEFEVTEVGVSSPHPVKKDMLIAGDVGYLTANIKSVRETRVGDTITSAENPTEKPLPGYRQIPPMVYSGMYPVDNQKYDDLKEALQKLQLNDAALEFEPETSQALGFGFRCGFLGLLHMDVVQERLEQEFGMDLIMTAPSVDYHAIMNDGSTKLIDNPADLPDAGEYKEVQEPYVKAEVMVPNDFVGPVMELCQRKRGEFVTMDYLDKYRVNVIYNMPLAEIIYDFFDELKSSTKGYASLDYEITGYRATDLVKIDMLLNKEPIDALSFIAHREEAQNRARQMTTMLKKLIPRQNFEVDIQGAIGAKIISRATIKPYRKDVTWKIHTGDPDRRAKLLEKQRRGKKRMKAVGKVEVPQDAFMAVLKMNDDDIKGK.

Residues 11–193 form the tr-type G domain; the sequence is KHIRNFSIVA…EIVKKVPAPN (183 aa). GTP is bound by residues 23-28 and 140-143; these read DHGKST and NKID.

It belongs to the TRAFAC class translation factor GTPase superfamily. Classic translation factor GTPase family. LepA subfamily.

The protein resides in the cell membrane. It catalyses the reaction GTP + H2O = GDP + phosphate + H(+). Functionally, required for accurate and efficient protein synthesis under certain stress conditions. May act as a fidelity factor of the translation reaction, by catalyzing a one-codon backward translocation of tRNAs on improperly translocated ribosomes. Back-translocation proceeds from a post-translocation (POST) complex to a pre-translocation (PRE) complex, thus giving elongation factor G a second chance to translocate the tRNAs correctly. Binds to ribosomes in a GTP-dependent manner. The polypeptide is Elongation factor 4 (Lactobacillus gasseri (strain ATCC 33323 / DSM 20243 / BCRC 14619 / CIP 102991 / JCM 1131 / KCTC 3163 / NCIMB 11718 / NCTC 13722 / AM63)).